The sequence spans 645 residues: Mediator of RNA polymerase II transcription subunit 17 (645 aa).

The segment at 215–234 (KAEDEESGSPPASPSGSGAA) is disordered. The span at 222–234 (GSPPASPSGSGAA) shows a compositional bias: low complexity.

The protein belongs to the Mediator complex subunit 17 family. Component of the Mediator complex.

Its subcellular location is the nucleus. Functionally, component of the Mediator complex, a coactivator involved in the regulated transcription of nearly all RNA polymerase II-dependent genes. Mediator functions as a bridge to convey information from gene-specific regulatory proteins to the basal RNA polymerase II transcription machinery. Mediator is recruited to promoters by direct interactions with regulatory proteins and serves as a scaffold for the assembly of a functional preinitiation complex with RNA polymerase II and the general transcription factors. The protein is Mediator of RNA polymerase II transcription subunit 17 (MED17) of Anopheles gambiae (African malaria mosquito).